The following is a 570-amino-acid chain: Hydroxylamine reductase (570 aa).

[4Fe-4S] cluster is bound by residues Cys5, Cys8, Cys17, and Cys23. Positions 266, 290, 334, 425, 453, 478, 513, and 515 each coordinate hybrid [4Fe-2O-2S] cluster. A Cysteine persulfide modification is found at Cys425.

It belongs to the HCP family. The cofactor is [4Fe-4S] cluster. It depends on hybrid [4Fe-2O-2S] cluster as a cofactor.

It is found in the cytoplasm. It carries out the reaction A + NH4(+) + H2O = hydroxylamine + AH2 + H(+). Catalyzes the reduction of hydroxylamine to form NH(3) and H(2)O. This is Hydroxylamine reductase from Clostridium tetani (strain Massachusetts / E88).